A 505-amino-acid chain; its full sequence is Maturase K (505 aa).

It belongs to the intron maturase 2 family. MatK subfamily.

Its subcellular location is the plastid. The protein localises to the chloroplast. In terms of biological role, usually encoded in the trnK tRNA gene intron. Probably assists in splicing its own and other chloroplast group II introns. In Froelichia floridana (Florida snake-cotton), this protein is Maturase K.